Here is a 192-residue protein sequence, read N- to C-terminus: Orotate phosphoribosyltransferase (192 aa).

116-124 (EDIVTTGLS) serves as a coordination point for 5-phospho-alpha-D-ribose 1-diphosphate. 2 residues coordinate orotate: T120 and R148.

This sequence belongs to the purine/pyrimidine phosphoribosyltransferase family. PyrE subfamily. As to quaternary structure, homodimer. It depends on Mg(2+) as a cofactor.

It carries out the reaction orotidine 5'-phosphate + diphosphate = orotate + 5-phospho-alpha-D-ribose 1-diphosphate. Its pathway is pyrimidine metabolism; UMP biosynthesis via de novo pathway; UMP from orotate: step 1/2. Catalyzes the transfer of a ribosyl phosphate group from 5-phosphoribose 1-diphosphate to orotate, leading to the formation of orotidine monophosphate (OMP). The protein is Orotate phosphoribosyltransferase of Brucella canis (strain ATCC 23365 / NCTC 10854 / RM-666).